Reading from the N-terminus, the 209-residue chain is Large ribosomal subunit protein uL3 (209 aa).

Position 150 is an N5-methylglutamine (Q150).

It belongs to the universal ribosomal protein uL3 family. As to quaternary structure, part of the 50S ribosomal subunit. Forms a cluster with proteins L14 and L19. Post-translationally, methylated by PrmB.

Functionally, one of the primary rRNA binding proteins, it binds directly near the 3'-end of the 23S rRNA, where it nucleates assembly of the 50S subunit. The polypeptide is Large ribosomal subunit protein uL3 (Vibrio vulnificus (strain YJ016)).